A 159-amino-acid chain; its full sequence is Phosphopantetheine adenylyltransferase (159 aa).

Ser-9 is a substrate binding site. ATP-binding positions include 9–10 and His-17; that span reads SF. Residues Lys-41, Ile-73, and Lys-87 each contribute to the substrate site. Residues 88 to 90, Glu-98, and 122 to 128 each bind ATP; these read GLR and WGYVSSS.

It belongs to the bacterial CoaD family. In terms of assembly, homohexamer. Mg(2+) is required as a cofactor.

It is found in the cytoplasm. It catalyses the reaction (R)-4'-phosphopantetheine + ATP + H(+) = 3'-dephospho-CoA + diphosphate. It participates in cofactor biosynthesis; coenzyme A biosynthesis; CoA from (R)-pantothenate: step 4/5. Functionally, reversibly transfers an adenylyl group from ATP to 4'-phosphopantetheine, yielding dephospho-CoA (dPCoA) and pyrophosphate. The polypeptide is Phosphopantetheine adenylyltransferase (Nocardioides sp. (strain ATCC BAA-499 / JS614)).